Here is a 266-residue protein sequence, read N- to C-terminus: Small ribosomal subunit protein uS2 (266 aa).

The segment at 227-266 (GVSFTEETPSEPIQSDSSEEEEGSLDISDLFEDTDLKEEE) is disordered. A compositionally biased stretch (polar residues) spans 231 to 240 (TEETPSEPIQ). Over residues 243 to 266 (SSEEEEGSLDISDLFEDTDLKEEE) the composition is skewed to acidic residues.

It belongs to the universal ribosomal protein uS2 family.

This is Small ribosomal subunit protein uS2 from Pseudothermotoga lettingae (strain ATCC BAA-301 / DSM 14385 / NBRC 107922 / TMO) (Thermotoga lettingae).